The sequence spans 347 residues: NADH-ubiquinone oxidoreductase chain 2 (347 aa).

Helical transmembrane passes span 3–23, 25–45, 59–79, 96–116, 148–170, 178–198, 200–220, 247–267, 276–296, and 326–346; these read PLILIMIMLTVILGTTIVMMS, HWLMIWMGFEMNMLAVIPLLM, YFLTQATASMLLMLAIIINLL, IIMTLAMAMKMGLAPLHFWVP, GINLDLILLMSMMSIAIGGWGGL, ILAYSSIAHMGWMASILAFNP, MTLLNLLLYILMTTTTFMLFM, IMLSLGGLPPLVGFLPKWMII, ITLATLMAITALLNLFFYMRL, and LPMLIILSTITLPLAPAITLL.

This sequence belongs to the complex I subunit 2 family. Core subunit of respiratory chain NADH dehydrogenase (Complex I) which is composed of 45 different subunits. Interacts with TMEM242.

It is found in the mitochondrion inner membrane. The enzyme catalyses a ubiquinone + NADH + 5 H(+)(in) = a ubiquinol + NAD(+) + 4 H(+)(out). Its function is as follows. Core subunit of the mitochondrial membrane respiratory chain NADH dehydrogenase (Complex I) which catalyzes electron transfer from NADH through the respiratory chain, using ubiquinone as an electron acceptor. Essential for the catalytic activity and assembly of complex I. The polypeptide is NADH-ubiquinone oxidoreductase chain 2 (Saccopteryx leptura (Lesser sac-winged bat)).